The sequence spans 329 residues: 4-hydroxythreonine-4-phosphate dehydrogenase (329 aa).

Residues His136 and Thr137 each coordinate substrate. His166, His211, and His266 together coordinate a divalent metal cation. Substrate is bound by residues Lys274, Asn283, and Arg292.

The protein belongs to the PdxA family. In terms of assembly, homodimer. Zn(2+) is required as a cofactor. It depends on Mg(2+) as a cofactor. Co(2+) serves as cofactor.

The protein localises to the cytoplasm. It catalyses the reaction 4-(phosphooxy)-L-threonine + NAD(+) = 3-amino-2-oxopropyl phosphate + CO2 + NADH. It participates in cofactor biosynthesis; pyridoxine 5'-phosphate biosynthesis; pyridoxine 5'-phosphate from D-erythrose 4-phosphate: step 4/5. Functionally, catalyzes the NAD(P)-dependent oxidation of 4-(phosphooxy)-L-threonine (HTP) into 2-amino-3-oxo-4-(phosphooxy)butyric acid which spontaneously decarboxylates to form 3-amino-2-oxopropyl phosphate (AHAP). This chain is 4-hydroxythreonine-4-phosphate dehydrogenase, found in Pseudomonas putida (strain ATCC 47054 / DSM 6125 / CFBP 8728 / NCIMB 11950 / KT2440).